The primary structure comprises 694 residues: Polyribonucleotide nucleotidyltransferase (694 aa).

The Mg(2+) site is built by D486 and D492. The 60-residue stretch at 553–612 (PRIETMQIKPTKIASVIGPGGKQIRQIIEETGVQIDVNDLGVVSISASSASAINKAKEII) folds into the KH domain. In terms of domain architecture, S1 motif spans 622–690 (GKTYRGRVTS…EKGQLKLSHK (69 aa)).

It belongs to the polyribonucleotide nucleotidyltransferase family. It depends on Mg(2+) as a cofactor.

Its subcellular location is the cytoplasm. The enzyme catalyses RNA(n+1) + phosphate = RNA(n) + a ribonucleoside 5'-diphosphate. In terms of biological role, involved in mRNA degradation. Catalyzes the phosphorolysis of single-stranded polyribonucleotides processively in the 3'- to 5'-direction. The polypeptide is Polyribonucleotide nucleotidyltransferase (Chlamydia pneumoniae (Chlamydophila pneumoniae)).